The following is a 157-amino-acid chain: Crossover junction endodeoxyribonuclease RuvC (157 aa).

Active-site residues include Asp7, Glu67, and Asp140. The Mg(2+) site is built by Asp7, Glu67, and Asp140.

It belongs to the RuvC family. As to quaternary structure, homodimer which binds Holliday junction (HJ) DNA. The HJ becomes 2-fold symmetrical on binding to RuvC with unstacked arms; it has a different conformation from HJ DNA in complex with RuvA. In the full resolvosome a probable DNA-RuvA(4)-RuvB(12)-RuvC(2) complex forms which resolves the HJ. Mg(2+) serves as cofactor.

The protein localises to the cytoplasm. The enzyme catalyses Endonucleolytic cleavage at a junction such as a reciprocal single-stranded crossover between two homologous DNA duplexes (Holliday junction).. Its function is as follows. The RuvA-RuvB-RuvC complex processes Holliday junction (HJ) DNA during genetic recombination and DNA repair. Endonuclease that resolves HJ intermediates. Cleaves cruciform DNA by making single-stranded nicks across the HJ at symmetrical positions within the homologous arms, yielding a 5'-phosphate and a 3'-hydroxyl group; requires a central core of homology in the junction. The consensus cleavage sequence is 5'-(A/T)TT(C/G)-3'. Cleavage occurs on the 3'-side of the TT dinucleotide at the point of strand exchange. HJ branch migration catalyzed by RuvA-RuvB allows RuvC to scan DNA until it finds its consensus sequence, where it cleaves and resolves the cruciform DNA. This chain is Crossover junction endodeoxyribonuclease RuvC, found in Thermosipho melanesiensis (strain DSM 12029 / CIP 104789 / BI429).